A 38-amino-acid chain; its full sequence is DNA binding protein ORF8 (38 aa).

The protein belongs to the microviridae J protein family.

The protein localises to the virion. It is found in the host cytoplasm. Functionally, mediates ssDNA packaging into virion, it locates to the internal surface of the capsid, thereby displacing the internal scaffolding protein during virion formation. Additionally, protein ORF8 plays a role in viral attachment to the host cell. This is DNA binding protein ORF8 from Spiroplasma melliferum (SpV4).